A 120-amino-acid chain; its full sequence is Large ribosomal subunit protein uL22 (120 aa).

It belongs to the universal ribosomal protein uL22 family. As to quaternary structure, part of the 50S ribosomal subunit.

Its function is as follows. This protein binds specifically to 23S rRNA; its binding is stimulated by other ribosomal proteins, e.g. L4, L17, and L20. It is important during the early stages of 50S assembly. It makes multiple contacts with different domains of the 23S rRNA in the assembled 50S subunit and ribosome. The globular domain of the protein is located near the polypeptide exit tunnel on the outside of the subunit, while an extended beta-hairpin is found that lines the wall of the exit tunnel in the center of the 70S ribosome. The chain is Large ribosomal subunit protein uL22 from Crocosphaera subtropica (strain ATCC 51142 / BH68) (Cyanothece sp. (strain ATCC 51142)).